The primary structure comprises 258 residues: UPF0246 protein CJA_0191 (258 aa).

Belongs to the UPF0246 family.

This is UPF0246 protein CJA_0191 from Cellvibrio japonicus (strain Ueda107) (Pseudomonas fluorescens subsp. cellulosa).